Here is a 661-residue protein sequence, read N- to C-terminus: UvrABC system protein B (661 aa).

The 158-residue stretch at 25-182 (AGLSSKKRSQ…NDLINLQYER (158 aa)) folds into the Helicase ATP-binding domain. 38–45 (GITGSGKT) lines the ATP pocket. Residues 91–114 (YYDYYQPEAYIARTDTFIEKDSSI) carry the Beta-hairpin motif. Residues 430 to 592 (QIEDLISEIQ…IIPKTINRTI (163 aa)) enclose the Helicase C-terminal domain. The UVR domain occupies 621–656 (KTHIDKLKKEMLKAASNLEFEQAAKLRDQLKTLEEA).

It belongs to the UvrB family. In terms of assembly, forms a heterotetramer with UvrA during the search for lesions. Interacts with UvrC in an incision complex.

The protein localises to the cytoplasm. Its function is as follows. The UvrABC repair system catalyzes the recognition and processing of DNA lesions. A damage recognition complex composed of 2 UvrA and 2 UvrB subunits scans DNA for abnormalities. Upon binding of the UvrA(2)B(2) complex to a putative damaged site, the DNA wraps around one UvrB monomer. DNA wrap is dependent on ATP binding by UvrB and probably causes local melting of the DNA helix, facilitating insertion of UvrB beta-hairpin between the DNA strands. Then UvrB probes one DNA strand for the presence of a lesion. If a lesion is found the UvrA subunits dissociate and the UvrB-DNA preincision complex is formed. This complex is subsequently bound by UvrC and the second UvrB is released. If no lesion is found, the DNA wraps around the other UvrB subunit that will check the other stand for damage. The chain is UvrABC system protein B from Rickettsia massiliae (strain Mtu5).